The following is a 621-amino-acid chain: Rab proteins geranylgeranyltransferase component A 2 (621 aa).

The interval 113-171 (VQDTETLQRSSPLEASATPADSLDSASLPKERQSAYSTSYEVPSRHTEESDRELSLPSA) is disordered. The span at 115-125 (DTETLQRSSPL) shows a compositional bias: polar residues. A compositionally biased stretch (basic and acidic residues) spans 155–166 (PSRHTEESDREL).

The protein belongs to the Rab GDI family. Monomer. Heterotrimer composed of RABGGTA, RABGGTB and CHML; within this trimer, RABGGTA and RABGGTB form the catalytic component B, while CHML (component A) mediates Rab protein binding. Interacts with RAB1A, RAB7A and RAB27A, but has much lower affinity for RAB1A, RAB7A and RAB27A than CHM. Interacts with the non-phosphorylated forms of RAB3A, RAB3B, RAB3C, RAB3D, RAB5B, RAB5C, RAB8A, RAB8B, RAB10, RAB12, RAB35, and RAB43.

It localises to the cytoplasm. The protein resides in the cytosol. In terms of biological role, substrate-binding subunit (component A) of the Rab geranylgeranyltransferase (GGTase) complex. Binds unprenylated Rab proteins and presents the substrate peptide to the catalytic component B. The component A is thought to be regenerated by transferring its prenylated Rab back to the donor membrane. Less effective than CHM in supporting prenylation of Rab3 family. This Mus musculus (Mouse) protein is Rab proteins geranylgeranyltransferase component A 2 (Chml).